The following is a 315-amino-acid chain: uncharacterized protein (315 aa).

This sequence belongs to the carbohydrate kinase PfkB family.

This is an uncharacterized protein from Escherichia coli (strain K12).